The primary structure comprises 383 residues: Protein COS7 (383 aa).

At 1-42 (MKENEVKDEKSVDVLSFKQLESQKIVLPQDLFRSSFTWFCYE) the chain is on the cytoplasmic side. Residues 43–63 (IYKSLAFRIWMLLWLPLSVWW) form a helical membrane-spanning segment. The Extracellular segment spans residues 64-72 (KLSNNCIYP). The chain crosses the membrane as a helical span at residues 73 to 93 (LIVSLLVLFLGPIFVLVICGL). Residues 94 to 232 (SRKRSLSKQL…RSKLTWFLKR (139 aa)) lie on the Cytoplasmic side of the membrane. A helical transmembrane segment spans residues 233–253 (IFTIYSLPLWLAFLNCICVSQ). Position 254 (His-254) is a topological domain, extracellular. A helical membrane pass occupies residues 255-275 (FCLAFRILCPGLFFLMMVWLF). The Cytoplasmic segment spans residues 276–383 (QNMRTTALLV…SRNEESLMKK (108 aa)).

It belongs to the DUP/COS family.

It is found in the membrane. This chain is Protein COS7 (COS7), found in Saccharomyces cerevisiae (strain ATCC 204508 / S288c) (Baker's yeast).